Consider the following 115-residue polypeptide: Phosphoribosyl-AMP cyclohydrolase (115 aa).

Position 80 (Asp80) interacts with Mg(2+). Residue Cys81 participates in Zn(2+) binding. Asp82 and Asp84 together coordinate Mg(2+). Cys97 and Cys104 together coordinate Zn(2+).

Belongs to the PRA-CH family. As to quaternary structure, homodimer. It depends on Mg(2+) as a cofactor. The cofactor is Zn(2+).

The protein resides in the cytoplasm. The enzyme catalyses 1-(5-phospho-beta-D-ribosyl)-5'-AMP + H2O = 1-(5-phospho-beta-D-ribosyl)-5-[(5-phospho-beta-D-ribosylamino)methylideneamino]imidazole-4-carboxamide. Its pathway is amino-acid biosynthesis; L-histidine biosynthesis; L-histidine from 5-phospho-alpha-D-ribose 1-diphosphate: step 3/9. Its function is as follows. Catalyzes the hydrolysis of the adenine ring of phosphoribosyl-AMP. The polypeptide is Phosphoribosyl-AMP cyclohydrolase (Rhodococcus erythropolis (strain PR4 / NBRC 100887)).